A 252-amino-acid polypeptide reads, in one-letter code: Geranylgeranylglyceryl phosphate synthase (252 aa).

Asp27 and Thr57 together coordinate Mg(2+). Sn-glycerol 1-phosphate contacts are provided by residues 175-181 (YLEAGSG), 206-207 (GG), and 228-229 (GN).

Belongs to the GGGP/HepGP synthase family. Group II subfamily. It depends on Mg(2+) as a cofactor.

Its subcellular location is the cytoplasm. The enzyme catalyses sn-glycerol 1-phosphate + (2E,6E,10E)-geranylgeranyl diphosphate = sn-3-O-(geranylgeranyl)glycerol 1-phosphate + diphosphate. It functions in the pathway membrane lipid metabolism; glycerophospholipid metabolism. Prenyltransferase that catalyzes the transfer of the geranylgeranyl moiety of geranylgeranyl diphosphate (GGPP) to the C3 hydroxyl of sn-glycerol-1-phosphate (G1P). This reaction is the first ether-bond-formation step in the biosynthesis of archaeal membrane lipids. The sequence is that of Geranylgeranylglyceryl phosphate synthase from Metallosphaera sedula (strain ATCC 51363 / DSM 5348 / JCM 9185 / NBRC 15509 / TH2).